The chain runs to 340 residues: Ketol-acid reductoisomerase (NADP(+)) (340 aa).

The KARI N-terminal Rossmann domain occupies 2–182 (AELYYDNQAD…GCTRAGVLRT (181 aa)). Residues 25-28 (FGSQ), Ser-51, Ser-53, and 83-86 (DIGQ) contribute to the NADP(+) site. Residue His-108 is part of the active site. Position 134 (Gly-134) interacts with NADP(+). The 146-residue stretch at 183-328 (TFAEETETDL…RELRRMMPFV (146 aa)) folds into the KARI C-terminal knotted domain. Mg(2+)-binding residues include Asp-191, Glu-195, Glu-227, and Glu-231. Ser-252 is a binding site for substrate.

This sequence belongs to the ketol-acid reductoisomerase family. Mg(2+) serves as cofactor.

It catalyses the reaction (2R)-2,3-dihydroxy-3-methylbutanoate + NADP(+) = (2S)-2-acetolactate + NADPH + H(+). The catalysed reaction is (2R,3R)-2,3-dihydroxy-3-methylpentanoate + NADP(+) = (S)-2-ethyl-2-hydroxy-3-oxobutanoate + NADPH + H(+). It participates in amino-acid biosynthesis; L-isoleucine biosynthesis; L-isoleucine from 2-oxobutanoate: step 2/4. It functions in the pathway amino-acid biosynthesis; L-valine biosynthesis; L-valine from pyruvate: step 2/4. Involved in the biosynthesis of branched-chain amino acids (BCAA). Catalyzes an alkyl-migration followed by a ketol-acid reduction of (S)-2-acetolactate (S2AL) to yield (R)-2,3-dihydroxy-isovalerate. In the isomerase reaction, S2AL is rearranged via a Mg-dependent methyl migration to produce 3-hydroxy-3-methyl-2-ketobutyrate (HMKB). In the reductase reaction, this 2-ketoacid undergoes a metal-dependent reduction by NADPH to yield (R)-2,3-dihydroxy-isovalerate. In Chloroflexus aurantiacus (strain ATCC 29366 / DSM 635 / J-10-fl), this protein is Ketol-acid reductoisomerase (NADP(+)).